The chain runs to 344 residues: Anthranilate phosphoribosyltransferase (344 aa).

5-phospho-alpha-D-ribose 1-diphosphate contacts are provided by residues Gly-85, 88 to 89, Thr-93, 95 to 98, 113 to 121, and Ser-125; these read GD, NIST, and KHGGRSVSS. Gly-85 is an anthranilate binding site. Ser-97 is a binding site for Mg(2+). Residue Arg-171 coordinates anthranilate. 2 residues coordinate Mg(2+): Asp-230 and Glu-231.

Belongs to the anthranilate phosphoribosyltransferase family. In terms of assembly, homodimer. Mg(2+) serves as cofactor.

It catalyses the reaction N-(5-phospho-beta-D-ribosyl)anthranilate + diphosphate = 5-phospho-alpha-D-ribose 1-diphosphate + anthranilate. It functions in the pathway amino-acid biosynthesis; L-tryptophan biosynthesis; L-tryptophan from chorismate: step 2/5. In terms of biological role, catalyzes the transfer of the phosphoribosyl group of 5-phosphorylribose-1-pyrophosphate (PRPP) to anthranilate to yield N-(5'-phosphoribosyl)-anthranilate (PRA). The protein is Anthranilate phosphoribosyltransferase of Acidovorax ebreus (strain TPSY) (Diaphorobacter sp. (strain TPSY)).